A 173-amino-acid polypeptide reads, in one-letter code: MEYNTSALCDIYMDQVDVVEPMFSNFGGRASFAGQITTVKCFEDNALIRETLEQDGVGRVLLVDGGGSLRRALLDGELAAIAEENEWEGIVVYGCVREVDELEDMNIGIQALASIPVSAAMQGVGEVDVPVNFGGVTFLPEDYLYADTTGIILSQEPLSADLEEDEEEPELLD.

It belongs to the RraA family. Homotrimer. Binds to both RNA-binding sites in the C-terminal region of Rne and to RhlB.

It is found in the cytoplasm. Globally modulates RNA abundance by binding to RNase E (Rne) and regulating its endonucleolytic activity. Can modulate Rne action in a substrate-dependent manner by altering the composition of the degradosome. Modulates RNA-binding and helicase activities of the degradosome. This chain is Regulator of ribonuclease activity A, found in Vibrio vulnificus (strain YJ016).